The sequence spans 125 residues: MRHRNSGVKLGRTSSHRKAMFQNLANSLFEHELIKTTVPKAKELRRVAEPLITLAKNDTVANRRLAFARTRSAATVGKLFTVLGPRYKERNGGYLRVLKAGFRAGDAAPMAYVELVDREVNTSAE.

It belongs to the bacterial ribosomal protein bL17 family. Part of the 50S ribosomal subunit. Contacts protein L32.

The polypeptide is Large ribosomal subunit protein bL17 (Acinetobacter baylyi (strain ATCC 33305 / BD413 / ADP1)).